We begin with the raw amino-acid sequence, 582 residues long: Potassium-transporting ATPase potassium-binding subunit (582 aa).

10 helical membrane-spanning segments follow: residues 11–31, 81–101, 148–168, 195–215, 272–292, 298–318, 379–399, 401–421, 439–459, and 551–571; these read AVFF…LAWV, LKAV…VLMF, FGIG…MPAF, LLPI…VQTI, VLTL…GAWV, GVAI…VAVV, ALGA…NGVG, GLLN…LMIG, VFVV…AAVV, and GLLI…ALVF.

This sequence belongs to the KdpA family. In terms of assembly, the system is composed of three essential subunits: KdpA, KdpB and KdpC.

It is found in the cell membrane. Functionally, part of the high-affinity ATP-driven potassium transport (or Kdp) system, which catalyzes the hydrolysis of ATP coupled with the electrogenic transport of potassium into the cytoplasm. This subunit binds the extracellular potassium ions and delivers the ions to the membrane domain of KdpB through an intramembrane tunnel. The sequence is that of Potassium-transporting ATPase potassium-binding subunit from Halobacterium salinarum (strain ATCC 700922 / JCM 11081 / NRC-1) (Halobacterium halobium).